Reading from the N-terminus, the 51-residue chain is Zinc metalloproteinase-disintegrin-like crovidisin (51 aa).

A Peptidase M12B domain is found at 1-12 (AMVTKNNGDLDK). The region spanning 13 to 18 (SGTECR) is the Disintegrin domain. Asn29 carries an N-linked (GlcNAc...) asparagine glycan.

This sequence belongs to the venom metalloproteinase (M12B) family. P-III subfamily. P-IIIa sub-subfamily. As to quaternary structure, monomer. The cofactor is Zn(2+). In terms of tissue distribution, expressed by the venom gland.

It is found in the secreted. In terms of biological role, snake venom zinc metalloproteinase-disintegrin-like that blocks the interaction between platelets and collagen fibers through its binding to collagen fibers, resulting in the blockade of collagen-mediated platelet functions such as adhesion, release reaction, thromboxane formation, and aggregation. Binds selectively to collagen type I with high affinity. Also exerts proteolytic activity to matrix. This Crotalus viridis viridis (Prairie rattlesnake) protein is Zinc metalloproteinase-disintegrin-like crovidisin.